The following is a 205-amino-acid chain: Thymidylate kinase (205 aa).

10 to 17 provides a ligand contact to ATP; that stretch reads GIDGAGKT.

The protein belongs to the thymidylate kinase family.

It carries out the reaction dTMP + ATP = dTDP + ADP. Its function is as follows. Phosphorylation of dTMP to form dTDP in both de novo and salvage pathways of dTTP synthesis. The chain is Thymidylate kinase from Nitrosospira multiformis (strain ATCC 25196 / NCIMB 11849 / C 71).